An 833-amino-acid polypeptide reads, in one-letter code: Leucine--tRNA ligase (833 aa).

A 'HIGH' region motif is present at residues 41–52; the sequence is PYPSGAGLHVGH. The short motif at 610–614 is the 'KMSKS' region element; it reads KMSKS. Residue K613 participates in ATP binding.

It belongs to the class-I aminoacyl-tRNA synthetase family.

Its subcellular location is the cytoplasm. It catalyses the reaction tRNA(Leu) + L-leucine + ATP = L-leucyl-tRNA(Leu) + AMP + diphosphate. In Streptococcus pneumoniae (strain ATCC 700669 / Spain 23F-1), this protein is Leucine--tRNA ligase.